The chain runs to 432 residues: Anaerobic glycerol-3-phosphate dehydrogenase subunit B (432 aa).

This sequence belongs to the anaerobic G-3-P dehydrogenase subunit B family. In terms of assembly, composed of a catalytic GlpA/B dimer and of membrane bound GlpC. The cofactor is FMN.

It catalyses the reaction a quinone + sn-glycerol 3-phosphate = dihydroxyacetone phosphate + a quinol. The protein operates within polyol metabolism; glycerol degradation via glycerol kinase pathway; glycerone phosphate from sn-glycerol 3-phosphate (anaerobic route): step 1/1. Its function is as follows. Conversion of glycerol 3-phosphate to dihydroxyacetone. Uses fumarate or nitrate as electron acceptor. In Haemophilus influenzae (strain PittEE), this protein is Anaerobic glycerol-3-phosphate dehydrogenase subunit B.